Here is a 102-residue protein sequence, read N- to C-terminus: MFLTALLWRGRIPGRQWIGKHRRPRFVSLRAKQNMIRRLEIEAENHYWLSMPYMTREQERGHAAVRRREAFEAIKAAATSKFPPHRFIADQLDHLNVTKKWS.

It belongs to the mitochondrion-specific ribosomal protein mL63 family. In terms of assembly, component of the mitochondrial large ribosomal subunit (mt-LSU). Mature mammalian 55S mitochondrial ribosomes consist of a small (28S) and a large (39S) subunit. The 28S small subunit contains a 12S ribosomal RNA (12S mt-rRNA) and 30 different proteins. The 39S large subunit contains a 16S rRNA (16S mt-rRNA), a copy of mitochondrial valine transfer RNA (mt-tRNA(Val)), which plays an integral structural role, and 52 different proteins.

It is found in the mitochondrion. The sequence is that of Large ribosomal subunit protein mL63 (MRPL57) from Homo sapiens (Human).